The following is a 390-amino-acid chain: Na(+)/H(+) antiporter NhaA (390 aa).

Transmembrane regions (helical) follow at residues Phe-13 to Ile-33, Leu-61 to Leu-81, Leu-99 to Ile-119, Gly-129 to Gly-149, Val-158 to Phe-178, Gly-181 to Leu-201, Phe-209 to His-229, Ala-259 to Val-279, Ile-297 to Val-317, Trp-330 to Val-350, and Ile-367 to Ala-387.

It belongs to the NhaA Na(+)/H(+) (TC 2.A.33) antiporter family.

It is found in the cell inner membrane. The catalysed reaction is Na(+)(in) + 2 H(+)(out) = Na(+)(out) + 2 H(+)(in). Functionally, na(+)/H(+) antiporter that extrudes sodium in exchange for external protons. This chain is Na(+)/H(+) antiporter NhaA, found in Pelagibacter ubique (strain HTCC1062).